We begin with the raw amino-acid sequence, 457 residues long: Choline kinase alpha (457 aa).

The tract at residues 1–86 is disordered; it reads MKTKFCTGGE…PPADEQPEPR (86 aa). Residues 13–32 are compositionally biased toward low complexity; it reads PSPLGLLLSCGSGSAAPAPG. Positions 55 to 80 are enriched in pro residues; the sequence is LALPPPPPLPLPLPLPQPPPPQPPAD. Residues 117 to 123, arginine 146, and 207 to 213 each bind ATP; these read RGGLSNM and QFIPSRR. A phosphocholine-binding site is contributed by 119-121; that stretch reads GLS. At lysine 247 the chain carries N6-acetyllysine. Residue serine 279 is modified to Phosphoserine. ATP contacts are provided by glutamine 308 and aspartate 330.

It belongs to the choline/ethanolamine kinase family. As to quaternary structure, homodimer. Heterodimer with CHKB. In terms of assembly, monomer; acetylation by KAT5 promotes dissociation of the homodimer and monomerization. (Microbial infection) Interacts with PI4KA/PI4KIIIalpha; CHKA bridges PI4KA/PI4KIIIalpha and hepatitis C virus (HCV) non-structural protein 5A (NS5A) and potentiates NS5A-stimulated PI4KA activity, which then facilitates the targeting of the ternary complex to the ER for viral replication. Post-translationally, phosphorylated at Ser-279 by AMPK in response to glucose deprivation, leading to localization to lipid droplets. Acetylated by KAT5 at Lys-247 following phosphorylation by AMPK, leading to monomerization and conversion into a tyrosine-protein kinase.

The protein resides in the cytoplasm. The protein localises to the cytosol. It is found in the lipid droplet. The catalysed reaction is choline + ATP = phosphocholine + ADP + H(+). It carries out the reaction ethanolamine + ATP = phosphoethanolamine + ADP + H(+). It catalyses the reaction L-tyrosyl-[protein] + ATP = O-phospho-L-tyrosyl-[protein] + ADP + H(+). It participates in phospholipid metabolism; phosphatidylcholine biosynthesis; phosphocholine from choline: step 1/1. It functions in the pathway phospholipid metabolism; phosphatidylethanolamine biosynthesis; phosphatidylethanolamine from ethanolamine: step 1/3. Homodimerization or heterodimerization is required for the choline and ethanolamine kinase activities. Plays a key role in phospholipid biosynthesis by catalyzing the phosphorylation of free choline to phosphocholine, the first step in phosphatidylcholine biosynthesis. Also phosphorylates ethanolamine, thereby contributing to phosphatidylethanolamine biosynthesis. Has higher activity with choline. May contribute to tumor cell growth. Functionally, this isoform plays a key role in lipolysis of lipid droplets following glucose deprivation. In response to glucose deprivation, phosphorylated by AMPK, promoting localization to lipid droplets. Phosphorylation is followed by acetylation by KAT5, leading to dissociation of the homodimer into a monomer. Monomeric CHKA isoform 1 is converted into a tyrosine-protein kinase, which phosphorylates lipid droplet structural proteins PLIN2 and PLIN3, leading to lipolysis of lipid droplets. This is Choline kinase alpha (CHKA) from Homo sapiens (Human).